The following is a 511-amino-acid chain: Trafficking protein particle complex subunit 13 homolog (511 aa).

It belongs to the TRAPPC13 family.

This chain is Trafficking protein particle complex subunit 13 homolog, found in Dictyostelium discoideum (Social amoeba).